The following is a 792-amino-acid chain: Probable G-protein coupled receptor 156 (792 aa).

The Extracellular segment spans residues 1 to 49 (MEPEINCSEFCDSFPGQELDRRPLHDLCKTTITDSQHGSADISPLSPAL). An N-linked (GlcNAc...) asparagine glycan is attached at asparagine 6. Residues 50 to 70 (LGVIWTFLSCGLLLVLFFLAF) form a helical membrane-spanning segment. The Cytoplasmic portion of the chain corresponds to 71-86 (TIRCRKNRIVKMSSPN). A helical membrane pass occupies residues 87–107 (LNIVTLLGSCLTYSSAYLFGI). Over 108–118 (QDALVGSSVEA) the chain is Extracellular. The chain crosses the membrane as a helical span at residues 119-139 (LIQTRLSLLCIGTTLVFGPIL). Residues 140 to 164 (GKSWRLYKVFTQRVPDKRVIIKDLQ) lie on the Cytoplasmic side of the membrane. Residues 165 to 185 (LLGLVAALVVADVILLVTWVL) traverse the membrane as a helical segment. The Extracellular portion of the chain corresponds to 186 to 222 (TDPIQCLQILGVSMKVTGRDVSCSLTNTHFCASRYSD). A helical transmembrane segment spans residues 223–243 (VWIALVLGCKGLLLLYGAYLA). Residues 244 to 257 (GLTNHVSSPPVNQS) lie on the Cytoplasmic side of the membrane. A helical transmembrane segment spans residues 258–278 (LTIMVGVNLLLLTAGLLFVVT). Residues 279 to 287 (RYLHSWPNL) are Extracellular-facing. A helical membrane pass occupies residues 288–308 (VFGLTSGGIFVCTTTVNCCVF). Topologically, residues 309-792 (LPQLRQRKAF…FKDDLKPTLV (484 aa)) are cytoplasmic. A coiled-coil region spans residues 354–390 (EXSCMERLLTEKNAVIESLQEQVSNAKEKLVKLMSAE). 3 disordered regions span residues 407–457 (GGPA…KYDM), 469–516 (GCSQ…EVLP), and 538–704 (DLGT…QRQP). Residues 422 to 434 (AAAEDSLPASAAS) show a composition bias toward low complexity. 2 stretches are compositionally biased toward basic and acidic residues: residues 443-457 (SRRD…KYDM) and 474-486 (PKAE…ERGN). The span at 554 to 567 (PWKSNTSGSPQKLS) shows a compositional bias: polar residues. Residues 578 to 589 (VRRRRAAQRARS) are compositionally biased toward basic residues. Polar residues predominate over residues 602–619 (QANNTVSGSQNGLIVQNR). Positions 620–635 (DSPRLDHHNARSKEPR) are enriched in basic and acidic residues. Over residues 675 to 704 (PRQPSASAPAQSSTAPCLSSXPALPRQRQP) the composition is skewed to low complexity.

It belongs to the G-protein coupled receptor 3 family. GABA-B receptor subfamily. Widely expressed throughout the brain and is particularly dense in the olfactory tubercles, islands of Calleja, nucleus accumbens, piriform cortex and all fields of the hippocampus.

It is found in the cell membrane. Orphan G-protein coupled receptor involved in the regulation of hair cell orientation in mechanosensory organs of the inner ear. It is required to trigger a 180 degree reversal in hair cell orientation, creating a virtual line of polarity reversal (LPR) across which stereociliary bundles are arranged in opposite orientations. The chain is Probable G-protein coupled receptor 156 (Gpr156) from Rattus norvegicus (Rat).